Here is a 147-residue protein sequence, read N- to C-terminus: uncharacterized protein (147 aa).

To M.jannaschii MJ0215.

This is an uncharacterized protein from Methanocaldococcus jannaschii (strain ATCC 43067 / DSM 2661 / JAL-1 / JCM 10045 / NBRC 100440) (Methanococcus jannaschii).